A 212-amino-acid polypeptide reads, in one-letter code: Protein-L-isoaspartate O-methyltransferase (212 aa).

The active site involves S56.

It belongs to the methyltransferase superfamily. L-isoaspartyl/D-aspartyl protein methyltransferase family.

The protein localises to the cytoplasm. The catalysed reaction is [protein]-L-isoaspartate + S-adenosyl-L-methionine = [protein]-L-isoaspartate alpha-methyl ester + S-adenosyl-L-homocysteine. Functionally, catalyzes the methyl esterification of L-isoaspartyl residues in peptides and proteins that result from spontaneous decomposition of normal L-aspartyl and L-asparaginyl residues. It plays a role in the repair and/or degradation of damaged proteins. The polypeptide is Protein-L-isoaspartate O-methyltransferase (Myxococcus xanthus (strain DK1622)).